Reading from the N-terminus, the 54-residue chain is Light-harvesting protein B-880 beta chain (54 aa).

Residues 1 to 20 (AEDRSSLSGVSDAEAKEFHA) are Cytoplasmic-facing. Positions 19 and 37 each coordinate a bacteriochlorophyll. The helical transmembrane segment at 21 to 43 (LFVSSFTAFIVIAVLAHVLAWAW) threads the bilayer. At 44 to 54 (RPWIPGPKGWA) the chain is on the periplasmic side.

The protein belongs to the antenna complex beta subunit family. As to quaternary structure, the core complex is formed by different alpha and beta chains, binding bacteriochlorophyll molecules, and arranged most probably in tetrameric structures disposed around the reaction center. The non-pigmented gamma chains may constitute additional components.

The protein localises to the cell inner membrane. Its function is as follows. Antenna complexes are light-harvesting systems, which transfer the excitation energy to the reaction centers. The sequence is that of Light-harvesting protein B-880 beta chain from Rhodoblastus acidophilus (Rhodopseudomonas acidophila).